The following is a 261-amino-acid chain: 4-hydroxy-tetrahydrodipicolinate reductase (261 aa).

8-13 (GYKGRM) serves as a coordination point for NAD(+). R36 lines the NADP(+) pocket. NAD(+) is bound by residues 95-97 (GTT) and 121-124 (APNF). H151 functions as the Proton donor/acceptor in the catalytic mechanism. Position 152 (H152) interacts with (S)-2,3,4,5-tetrahydrodipicolinate. K155 serves as the catalytic Proton donor. 161-162 (GT) contributes to the (S)-2,3,4,5-tetrahydrodipicolinate binding site.

The protein belongs to the DapB family.

It is found in the cytoplasm. The enzyme catalyses (S)-2,3,4,5-tetrahydrodipicolinate + NAD(+) + H2O = (2S,4S)-4-hydroxy-2,3,4,5-tetrahydrodipicolinate + NADH + H(+). The catalysed reaction is (S)-2,3,4,5-tetrahydrodipicolinate + NADP(+) + H2O = (2S,4S)-4-hydroxy-2,3,4,5-tetrahydrodipicolinate + NADPH + H(+). It functions in the pathway amino-acid biosynthesis; L-lysine biosynthesis via DAP pathway; (S)-tetrahydrodipicolinate from L-aspartate: step 4/4. In terms of biological role, catalyzes the conversion of 4-hydroxy-tetrahydrodipicolinate (HTPA) to tetrahydrodipicolinate. This Lactiplantibacillus plantarum (strain ATCC BAA-793 / NCIMB 8826 / WCFS1) (Lactobacillus plantarum) protein is 4-hydroxy-tetrahydrodipicolinate reductase.